Consider the following 1343-residue polypeptide: DNA-directed RNA polymerase subunit beta (1343 aa).

This sequence belongs to the RNA polymerase beta chain family. As to quaternary structure, the RNAP catalytic core consists of 2 alpha, 1 beta, 1 beta' and 1 omega subunit. When a sigma factor is associated with the core the holoenzyme is formed, which can initiate transcription.

The catalysed reaction is RNA(n) + a ribonucleoside 5'-triphosphate = RNA(n+1) + diphosphate. In terms of biological role, DNA-dependent RNA polymerase catalyzes the transcription of DNA into RNA using the four ribonucleoside triphosphates as substrates. This chain is DNA-directed RNA polymerase subunit beta, found in Shewanella loihica (strain ATCC BAA-1088 / PV-4).